Consider the following 1217-residue polypeptide: Splicing factor 3B subunit 3 (1217 aa).

Interaction with PHF5A, SF3B1 and SF3B5 regions lie at residues 105 to 119 and 145 to 168; these read ETFGKSGCRRIVPGQ and NRDAAARLTISSPLEAHKANTLVY. S156 is subject to Phosphoserine. Interaction with SF3B1 and SF3B5 regions lie at residues 193–231 and 786–804; these read DNDPTGEAAANTQQTLTFYELDLGLNHVVRKYSEPLEEH and RKFVIHPESNNLIIIETDH. Positions 1028-1049 are interaction with SF3B1; the sequence is TYPRWVTTASLLDYDTVAGADK. Residues 1100 to 1123 form an interaction with SF3B5 region; it reads TVLSLQKTTLIPGGSESLVYTTLS. T1200 carries the post-translational modification Phosphothreonine.

This sequence belongs to the RSE1 family. As to quaternary structure, component of the 17S U2 SnRNP complex, a ribonucleoprotein complex that contains small nuclear RNA (snRNA) U2 and a number of specific proteins. Part of the SF3B subcomplex of the 17S U2 SnRNP complex. SF3B associates with the splicing subcomplex SF3A and a 12S RNA unit to form the U2 small nuclear ribonucleoproteins complex (U2 snRNP). Within the SF3B subcomplex, interacts directly with SF3B1 (via HEAT domain), SF3B5 and PHF5A. Identified in the spliceosome A complex; remains associated with the spliceosome throughout the splicing process. Component of the spliceosome B complex. Identified in the spliceosome C complex. Identified in the spliceosome E complex. Component of the minor (U12-type spliceosome) spliceosome. Within this complex, interacts with SCNM1. Associates with the STAGA transcription coactivator-HAT complex. Interacts with SUPT3H. Interacts with TAF3.

It is found in the nucleus. Component of the 17S U2 SnRNP complex of the spliceosome, a large ribonucleoprotein complex that removes introns from transcribed pre-mRNAs. The 17S U2 SnRNP complex (1) directly participates in early spliceosome assembly and (2) mediates recognition of the intron branch site during pre-mRNA splicing by promoting the selection of the pre-mRNA branch-site adenosine, the nucleophile for the first step of splicing. Within the 17S U2 SnRNP complex, SF3B3 is part of the SF3B subcomplex, which is required for 'A' complex assembly formed by the stable binding of U2 snRNP to the branchpoint sequence in pre-mRNA. Sequence independent binding of SF3A and SF3B subcomplexes upstream of the branch site is essential, it may anchor U2 snRNP to the pre-mRNA. May also be involved in the assembly of the 'E' complex. Also acts as a component of the minor spliceosome, which is involved in the splicing of U12-type introns in pre-mRNAs. The sequence is that of Splicing factor 3B subunit 3 (Sf3b3) from Mus musculus (Mouse).